A 636-amino-acid polypeptide reads, in one-letter code: Chaperone protein HtpG (636 aa).

Residues 1-342 (MSGETLEFQA…AHDLSLNISR (342 aa)) form an a; substrate-binding region. Residues 343–558 (ELLQQDRQIQ…AHDVTPTLEK (216 aa)) are b. Residues 559 to 636 (MYRAMGHEVP…ILAERLARTL (78 aa)) form a c region.

It belongs to the heat shock protein 90 family. In terms of assembly, homodimer.

It localises to the cytoplasm. Its function is as follows. Molecular chaperone. Has ATPase activity. The protein is Chaperone protein HtpG of Salinispora arenicola (strain CNS-205).